A 274-amino-acid polypeptide reads, in one-letter code: Large ribosomal subunit protein uL2 (274 aa).

Disordered stretches follow at residues Ala-28–Ile-54 and Val-224–Lys-274. Basic and acidic residues predominate over residues Lys-263–Lys-274.

The protein belongs to the universal ribosomal protein uL2 family. In terms of assembly, part of the 50S ribosomal subunit. Forms a bridge to the 30S subunit in the 70S ribosome.

Functionally, one of the primary rRNA binding proteins. Required for association of the 30S and 50S subunits to form the 70S ribosome, for tRNA binding and peptide bond formation. It has been suggested to have peptidyltransferase activity; this is somewhat controversial. Makes several contacts with the 16S rRNA in the 70S ribosome. This chain is Large ribosomal subunit protein uL2, found in Pseudomonas savastanoi pv. phaseolicola (strain 1448A / Race 6) (Pseudomonas syringae pv. phaseolicola (strain 1448A / Race 6)).